The primary structure comprises 259 residues: Ribonuclease T2-B (259 aa).

Residues 1–29 (MAPAEARGALPGWISVLGWGLALCSLCGA) form the signal peptide. A disulfide bridge connects residues Cys-53 and Cys-59. His-69 is a catalytic residue. Cystine bridges form between Cys-79–Cys-125, Cys-188–Cys-244, and Cys-206–Cys-217. Asn-80 and Asn-110 each carry an N-linked (GlcNAc...) asparagine glycan. Residues Glu-118 and His-122 contribute to the active site. Asn-216 carries N-linked (GlcNAc...) asparagine glycosylation.

The protein belongs to the RNase T2 family.

It is found in the secreted. The protein localises to the lysosome lumen. Its subcellular location is the endoplasmic reticulum lumen. It localises to the mitochondrion intermembrane space. The enzyme catalyses a ribonucleotidyl-ribonucleotide-RNA + H2O = a 3'-end 3'-phospho-ribonucleotide-RNA + a 5'-end dephospho-ribonucleoside-RNA + H(+). It catalyses the reaction an adenylyl-uridine-RNA = a 3'-end 2',3'-cyclophospho-AMP-RNA + a 5'-end dephospho-uridine-RNA. The catalysed reaction is a guanylyl-uridine-RNA = a 3'-end 2',3'-cyclophospho-GMP-RNA + a 5'-end dephospho-uridine-RNA. Its activity is regulated as follows. Inhibited by Zn(2+) and Cu(2+). In terms of biological role, ribonuclease that plays an essential role in innate immune response by recognizing and degrading RNAs from microbial pathogens that are subsequently sensed by TLR8. Cleaves preferentially single-stranded RNA molecules between purine and uridine residues, which critically contributes to the supply of catabolic uridine and the generation of purine-2',3'-cyclophosphate-terminated oligoribonucleotides. In turn, RNase T2 degradation products promote the RNA-dependent activation of TLR8. In plasmacytoid dendritic cells, it cooperates with PLD3 or PLD4 5'-&gt;3' exonucleases to process RNA fragments and release 2',3'-cyclic guanosine monophosphate (2',3'-cGMP), a potent stimulatory ligand for TLR7. Also plays a key role in degradation of mitochondrial RNA and processing of non-coding RNA imported from the cytosol into mitochondria. Participates as well in degradation of mitochondrion-associated cytosolic rRNAs. The protein is Ribonuclease T2-B of Mus musculus (Mouse).